A 249-amino-acid polypeptide reads, in one-letter code: 23S rRNA (guanosine-2'-O-)-methyltransferase RlmB (249 aa).

Residues Gly-200, Ile-220, and Leu-229 each contribute to the S-adenosyl-L-methionine site.

Belongs to the class IV-like SAM-binding methyltransferase superfamily. RNA methyltransferase TrmH family. RlmB subfamily.

The protein resides in the cytoplasm. The catalysed reaction is guanosine(2251) in 23S rRNA + S-adenosyl-L-methionine = 2'-O-methylguanosine(2251) in 23S rRNA + S-adenosyl-L-homocysteine + H(+). Its function is as follows. Specifically methylates the ribose of guanosine 2251 in 23S rRNA. This chain is 23S rRNA (guanosine-2'-O-)-methyltransferase RlmB, found in Xanthomonas axonopodis pv. citri (strain 306).